The primary structure comprises 127 residues: Small ribosomal subunit protein bS6 (127 aa).

The interval 96 to 127 is disordered; the sequence is VTTPSPMMKEEKSRSLTPAAGDEGKPAEAAEA. Positions 117-127 are enriched in basic and acidic residues; sequence DEGKPAEAAEA.

It belongs to the bacterial ribosomal protein bS6 family.

In terms of biological role, binds together with bS18 to 16S ribosomal RNA. In Azoarcus sp. (strain BH72), this protein is Small ribosomal subunit protein bS6.